The following is a 708-amino-acid chain: ABC transporter G family member 18 (708 aa).

An ABC transporter domain is found at 75 to 317 (RRRFDFSRRK…FSSFGRPIPE (243 aa)). Residue 109-116 (GGSGAGKS) coordinates ATP. The ABC transmembrane type-2 domain maps to 402–612 (AETFILAKRY…PYEAVLINEF (211 aa)). A run of 7 helical transmembrane segments spans residues 421 to 441 (LIGM…TVYW), 456 to 476 (FFAF…PVFI), 508 to 528 (LLAL…LSGG), 537 to 557 (LIIY…SGLI), 560 to 580 (VMMS…LGGF), 589 to 609 (LYWI…AVLI), and 681 to 701 (LWIT…SLLF).

It belongs to the ABC transporter superfamily. ABCG family. Eye pigment precursor importer (TC 3.A.1.204) subfamily.

It is found in the membrane. In Arabidopsis thaliana (Mouse-ear cress), this protein is ABC transporter G family member 18 (ABCG18).